The primary structure comprises 205 residues: Holliday junction branch migration complex subunit RuvA (205 aa).

Residues 1 to 64 (MIGKLRGIVD…DEAIRLIGFT (64 aa)) form a domain I region. The tract at residues 65 to 143 (TDSEREWFRL…DSMGLSAALE (79 aa)) is domain II. Residues 144–152 (VGVNGEAVS) are flexible linker. Positions 153–205 (SVSAPARDAVSALVNLGYPQAQAMGAVAAAAKRLDDAASTEQLIRHGLKELAR) are domain III.

It belongs to the RuvA family. Homotetramer. Forms an RuvA(8)-RuvB(12)-Holliday junction (HJ) complex. HJ DNA is sandwiched between 2 RuvA tetramers; dsDNA enters through RuvA and exits via RuvB. An RuvB hexamer assembles on each DNA strand where it exits the tetramer. Each RuvB hexamer is contacted by two RuvA subunits (via domain III) on 2 adjacent RuvB subunits; this complex drives branch migration. In the full resolvosome a probable DNA-RuvA(4)-RuvB(12)-RuvC(2) complex forms which resolves the HJ.

It is found in the cytoplasm. Functionally, the RuvA-RuvB-RuvC complex processes Holliday junction (HJ) DNA during genetic recombination and DNA repair, while the RuvA-RuvB complex plays an important role in the rescue of blocked DNA replication forks via replication fork reversal (RFR). RuvA specifically binds to HJ cruciform DNA, conferring on it an open structure. The RuvB hexamer acts as an ATP-dependent pump, pulling dsDNA into and through the RuvAB complex. HJ branch migration allows RuvC to scan DNA until it finds its consensus sequence, where it cleaves and resolves the cruciform DNA. This Parvibaculum lavamentivorans (strain DS-1 / DSM 13023 / NCIMB 13966) protein is Holliday junction branch migration complex subunit RuvA.